Here is a 231-residue protein sequence, read N- to C-terminus: Large ribosomal subunit protein uL1 (231 aa).

Belongs to the universal ribosomal protein uL1 family. As to quaternary structure, part of the 50S ribosomal subunit.

In terms of biological role, binds directly to 23S rRNA. The L1 stalk is quite mobile in the ribosome, and is involved in E site tRNA release. Protein L1 is also a translational repressor protein, it controls the translation of the L11 operon by binding to its mRNA. This is Large ribosomal subunit protein uL1 from Acinetobacter baumannii (strain AB307-0294).